A 201-amino-acid polypeptide reads, in one-letter code: Ribonuclease HII (201 aa).

An RNase H type-2 domain is found at 11–201; it reads LRECGCDEAG…VVDADRPTTE (191 aa). The a divalent metal cation site is built by Asp17, Glu18, and Asp109.

It belongs to the RNase HII family. It depends on Mn(2+) as a cofactor. Requires Mg(2+) as cofactor.

The protein localises to the cytoplasm. It carries out the reaction Endonucleolytic cleavage to 5'-phosphomonoester.. Functionally, endonuclease that specifically degrades the RNA of RNA-DNA hybrids. In Porphyromonas gingivalis (strain ATCC BAA-308 / W83), this protein is Ribonuclease HII (rnhB).